The following is a 474-amino-acid chain: Vitamin D-binding protein (474 aa).

An N-terminal signal peptide occupies residues 1–16; that stretch reads MKRVLVLLLAVAFGHA. 3 Albumin domains span residues 17-208, 209-394, and 395-474; these read LERG…QLKH, LSLL…LLKK, and ELSS…KNIL. Disulfide bonds link C29/C75, C74/C83, C96/C112, C111/C122, C145/C190, C189/C198, C220/C266, C265/C273, C286/C300, C299/C311, C335/C376, C375/C384, C407/C453, and C452/C462.

Belongs to the ALB/AFP/VDB family. Associates with membrane-bound immunoglobulin on the surface of B-lymphocytes and with IgG Fc receptor on the membranes of T-lymphocytes. Interacts with LRP2; the interaction is required for renal uptake of GC in complex with 25-hydroxyvitamin D3. Post-translationally, allele GC*1S is O-glycosylated at Thr-436. The trisaccharide sugar moiety can be modified by the successive removal of neuraminic acid and galactose leaving an O-mceeN-acetyl-galactosamine. This conversion is thought to produce a macrophage-activating factor (Gc-MAF). Only a minor proportion of plasma GC is O-glycosylated. The potential N-glycosylation site predicted at Asn-288 is thought to be nonglycosylated. Expressed in the liver. Found in plasma, ascites, cerebrospinal fluid and urine.

The protein resides in the secreted. Involved in vitamin D transport and storage, scavenging of extracellular G-actin, enhancement of the chemotactic activity of C5 alpha for neutrophils in inflammation and macrophage activation. The protein is Vitamin D-binding protein (GC) of Homo sapiens (Human).